Here is a 692-residue protein sequence, read N- to C-terminus: Elongation factor G (692 aa).

In terms of domain architecture, tr-type G spans 8 to 283 (KNTRNIGIMA…AVLDYLPSPV (276 aa)). GTP is bound by residues 17-24 (AHIDAGKT), 81-85 (DTPGH), and 135-138 (NKMD).

Belongs to the TRAFAC class translation factor GTPase superfamily. Classic translation factor GTPase family. EF-G/EF-2 subfamily.

Its subcellular location is the cytoplasm. Functionally, catalyzes the GTP-dependent ribosomal translocation step during translation elongation. During this step, the ribosome changes from the pre-translocational (PRE) to the post-translocational (POST) state as the newly formed A-site-bound peptidyl-tRNA and P-site-bound deacylated tRNA move to the P and E sites, respectively. Catalyzes the coordinated movement of the two tRNA molecules, the mRNA and conformational changes in the ribosome. The sequence is that of Elongation factor G from Exiguobacterium sibiricum (strain DSM 17290 / CCUG 55495 / CIP 109462 / JCM 13490 / 255-15).